We begin with the raw amino-acid sequence, 208 residues long: Uracil phosphoribosyltransferase (208 aa).

Residues arginine 78, arginine 103, and 130–138 (DPMLATGGS) each bind 5-phospho-alpha-D-ribose 1-diphosphate. Uracil is bound by residues isoleucine 193 and 198-200 (GDA). Aspartate 199 serves as a coordination point for 5-phospho-alpha-D-ribose 1-diphosphate.

It belongs to the UPRTase family. Mg(2+) is required as a cofactor.

The catalysed reaction is UMP + diphosphate = 5-phospho-alpha-D-ribose 1-diphosphate + uracil. It functions in the pathway pyrimidine metabolism; UMP biosynthesis via salvage pathway; UMP from uracil: step 1/1. Its activity is regulated as follows. Allosterically activated by GTP. Functionally, catalyzes the conversion of uracil and 5-phospho-alpha-D-ribose 1-diphosphate (PRPP) to UMP and diphosphate. The chain is Uracil phosphoribosyltransferase from Escherichia coli O139:H28 (strain E24377A / ETEC).